The primary structure comprises 406 residues: Tryptophan 2,3-dioxygenase (406 aa).

Phosphoserine is present on serine 19. Substrate-binding positions include 72-76 (FIITH) and arginine 144. Histidine 328 serves as a coordination point for heme. Threonine 342 contributes to the substrate binding site.

It belongs to the tryptophan 2,3-dioxygenase family. Homotetramer. Dimer of dimers. Requires heme as cofactor.

The enzyme catalyses L-tryptophan + O2 = N-formyl-L-kynurenine. The protein operates within amino-acid degradation; L-tryptophan degradation via kynurenine pathway; L-kynurenine from L-tryptophan: step 1/2. Heme-dependent dioxygenase that catalyzes the oxidative cleavage of the L-tryptophan (L-Trp) pyrrole ring and converts L-tryptophan to N-formyl-L-kynurenine. Catalyzes the oxidative cleavage of the indole moiety. The polypeptide is Tryptophan 2,3-dioxygenase (Mus musculus (Mouse)).